A 460-amino-acid polypeptide reads, in one-letter code: Cation efflux system protein CusC (460 aa).

The first 17 residues, Met1–Gly17, serve as a signal peptide directing secretion. The N-palmitoyl cysteine moiety is linked to residue Cys18. A lipid anchor (S-diacylglycerol cysteine) is attached at Cys18.

Belongs to the outer membrane factor (OMF) (TC 1.B.17) family. As to quaternary structure, homotrimer. Component of the cus efflux system composed of CusA, CusB, CusC and CusF.

It is found in the cell outer membrane. Its function is as follows. Forms pores that allow passive diffusion of cations across the outer membrane. Part of a cation efflux system that mediates resistance to copper and silver. The protein is Cation efflux system protein CusC (cusC) of Escherichia coli O6:H1 (strain CFT073 / ATCC 700928 / UPEC).